We begin with the raw amino-acid sequence, 307 residues long: Tropinone reductase homolog At2g29340 (307 aa).

NADP(+) is bound at residue 13 to 37 (LVTGGASGIGYAIVEELAGFGARIH). Residue Ser146 coordinates substrate. Tyr159 (proton acceptor) is an active-site residue.

It belongs to the short-chain dehydrogenases/reductases (SDR) family. SDR65C subfamily.

The polypeptide is Tropinone reductase homolog At2g29340 (Arabidopsis thaliana (Mouse-ear cress)).